Reading from the N-terminus, the 469-residue chain is MMKNRVSNIHFVGIGGVGMSGIAEVLHNLGFKVSGSDQARNAATEHLSSLGIQVYPGHTAEHVNGADVVVASTAVKKENPEVVAALERQIPVIPRALMLAELMRFRDGIAIAGTHGKTTTTSLTASILGAAGLDPTFVIGGKLNAAGTNARLGKGEYIVAEADESDASFLHLTPIMSVVTNIDEDHMDTYGHSVEKLHQAFIDFIHRMPFYGKAFLCVDSEHVRAILPKVSKPYATYGLDDTADIYATDIENVGAQMKFTVHVQMKGHEQGSFEVVLNMPGRHNVLNALAAIGVALEVGASVEAIQKGLLGFEGVGRRFQKYGDIKLPNGGTALLVDDYGHHPVEMAATLAAARGAYPEKRLVLAFQPHRYTRTRDLFEDFTKVLNTVDALVLTEVYAAGEEPVAAADSRALARAIRVLGKLEPIYCENVADLPQMLMNVLQDGDVVLNMGAGSINRVPSALLELSKQI.

113–119 is a binding site for ATP; sequence GTHGKTT.

This sequence belongs to the MurCDEF family.

The protein resides in the cytoplasm. The enzyme catalyses UDP-N-acetyl-alpha-D-muramate + L-alanine + ATP = UDP-N-acetyl-alpha-D-muramoyl-L-alanine + ADP + phosphate + H(+). It participates in cell wall biogenesis; peptidoglycan biosynthesis. Cell wall formation. In Neisseria gonorrhoeae (strain ATCC 700825 / FA 1090), this protein is UDP-N-acetylmuramate--L-alanine ligase.